The chain runs to 453 residues: Tetrahydroanabasine acetyltransferase (453 aa).

Catalysis depends on proton acceptor residues H163 and D388.

The protein belongs to the plant acyltransferase family. As to quaternary structure, monomer.

It catalyses the reaction tetrahydroanabasine + acetyl-CoA = ammodendrine + CoA. It functions in the pathway alkaloid biosynthesis. Functionally, tetrahydroanabasine acetyltransferase involved in the accumulation of quinolizidine type antinutritional alkaloids (QAs). QAs impart a bitter taste to plants, acting as repellents and toxicants for herbivores and predators, and possess a variety of pharmacological effects, including sedative, anticonvulsant, anti-inflammatory, antiviral, antitumor, antipyretic, anti-hepatitis B, antifibrotic, antiallergic, antidiarrheal, analgesic and antimicrobial activities. Mediates the conversion of tetrahydroanabasine into ammodendrine. This Lupinus angustifolius (Narrow-leaved blue lupine) protein is Tetrahydroanabasine acetyltransferase.